Here is a 496-residue protein sequence, read N- to C-terminus: Fibronectin type III and SPRY domain-containing protein 1 (496 aa).

A coiled-coil region spans residues 4–99 (QREALRKIIT…ALESSEELLE (96 aa)). Residues 105–162 (LQASDSEDFSQAAKEIKDGITMAPAFRLSLKAKVSDNMSHLMVDFAQERQMLQALKFL) form the COS domain. The Fibronectin type-III domain occupies 164-268 (VPSAPTIDLA…EPVTLETPAF (105 aa)). Residues 290–477 (WDAMGGKVQD…VTTGLQVPSA (188 aa)) enclose the B30.2/SPRY domain. Residues 301-336 (KAREKEGKGRTASPVNSPARGTPSPKRMSSGRGGRD) are disordered. Arginine 310 and arginine 320 each carry omega-N-methylarginine.

As to quaternary structure, oligomerization is required for binding to microtubules.

The protein localises to the cytoplasm. The protein resides in the cytoskeleton. It is found in the microtubule organizing center. It localises to the centrosome. Its subcellular location is the nucleus. The protein localises to the cleavage furrow. Its function is as follows. May be involved in microtubule organization and stabilization. The sequence is that of Fibronectin type III and SPRY domain-containing protein 1 (Fsd1) from Mus musculus (Mouse).